We begin with the raw amino-acid sequence, 88 residues long: FAD assembly factor SdhE (88 aa).

The protein belongs to the SdhE FAD assembly factor family. Monomer. Makes weak or transient interactions with SdhA. Interacts with YgfX. Interacts with FrdA.

It is found in the cytoplasm. Its pathway is antibiotic biosynthesis; prodigiosin biosynthesis. Functionally, an FAD assembly protein, which accelerates covalent attachment of the cofactor into other proteins. Plays an essential role in the assembly of succinate dehydrogenase (SDH, respiratory complex II), an enzyme complex that is a component of both the tricarboxylic acid cycle and the electron transport chain, and which couples the oxidation of succinate to fumarate with the reduction of ubiquinone (coenzyme Q) to ubiquinol. Required for flavinylation (covalent attachment of FAD) of the flavoprotein subunit SdhA of SDH. Required for flavinylation of the flavoprotein subunit FrdA of fumarate reductase (FRD). Flavinylation of SDH and FRD occurs in a similar but not identical manner, as site-specific mutations display subtle differences between them. Flavinylates SdhA in vivo in the absence of the other SDH subunits; SdhE mutants that do not flavinylate also interfere with wild-type activity in a possible dominant-negative fashion. Weakly binds to FAD and facilitates its binding to SdhA. Required for production of prodigiosin antibiotic (Pig); overproduction of SdhE in a deletion mutant leads to decreased synthesis of Pig compared to wild-type. Capable of flavinylating A.pasteurianus SdhA when the SDH operon and this gene are expressed in G.oxydans; flavinylation of SdhA is detected only in the presence of sdhE. This is FAD assembly factor SdhE from Serratia sp. (strain ATCC 39006) (Prodigiosinella confusarubida).